Consider the following 115-residue polypeptide: MTYSKIACSLGKRGIARAPNQASSFFLLLFLFAKFSQQLSPSPCLASSGVAKSRGPASTDRPCSASMAEAVLDLLADCSPTASVPVAANAPSCAGVAASAGAQGASPSSQVSPQA.

Residues 1–38 (MTYSKIACSLGKRGIARAPNQASSFFLLLFLFAKFSQQ) form the signal peptide. The interval 42–62 (SPCLASSGVAKSRGPASTDRP) is disordered.

It functions in the pathway secondary metabolite biosynthesis. In terms of biological role, part of the gene cluster that mediates the biosynthesis of the glycolipid biosurfactant ustilagic acid (UA). UA is a secreted cellobiose glycolipid that is toxic for many microorganisms and confers biocontrol activity to U.maydis. UA consists of 15,16-dihydroxypalmitic or 2,15,16-trihydroxypalmitic acid, which is O-glycosidically linked to cellobiose at its terminal hydroxyl group. In addition, the cellobiose moiety is acetylated and acylated with a short-chain hydroxy fatty acid. UA biosynthesis starts with omega-hydroxylation of palmitic acid catalyzed by the cytochrome P450 monooxygenase cyp1. Terminal hydroxylation of palmitic acid precedes subterminal hydroxylation catalyzed by the cytochrome P450 monooxygenase cyp2. Sequential glucosylation of the hydroxy fatty acid is probably catalyzed by the glycosyltransferase ugt1. The cellobiose lipid is further decorated by acetylation of the proximal glucose residue and by acylation with a short-chain beta-hydroxy fatty acid at the distal glucose residue. The acyltransferase uat1 may be a good candidate for catalyzing either acetylation or acylation of the cellobiose lipid. The fatty acid synthase fas2 may be involved in synthesis of the carbon backbone of the short-chain beta-hydroxy fatty acid esterified to the cellobiose disaccharide. The secreted UA consists of a mixture of both alpha-hydroxylated and non-hydroxylated glycolipids; therefore, alpha-hydroxylation of the long-chain fatty, catalyzed by the fatty acid hydroxylase ahd1, occurs late in UA biosynthesis and may be the last step before secretion. The protein is Ustilagic acid biosynthesis cluster protein orf3 of Mycosarcoma maydis (Corn smut fungus).